The sequence spans 273 residues: 4-hydroxy-tetrahydrodipicolinate reductase (273 aa).

NAD(+) contacts are provided by residues Gly-12–Met-17 and Glu-38. Arg-39 provides a ligand contact to NADP(+). NAD(+) is bound by residues Gly-102–Thr-104 and Ala-126–Phe-129. The Proton donor/acceptor role is filled by His-159. Residue His-160 coordinates (S)-2,3,4,5-tetrahydrodipicolinate. Catalysis depends on Lys-163, which acts as the Proton donor. (S)-2,3,4,5-tetrahydrodipicolinate is bound at residue Gly-169 to Thr-170.

This sequence belongs to the DapB family. As to quaternary structure, homotetramer.

It is found in the cytoplasm. It catalyses the reaction (S)-2,3,4,5-tetrahydrodipicolinate + NAD(+) + H2O = (2S,4S)-4-hydroxy-2,3,4,5-tetrahydrodipicolinate + NADH + H(+). It carries out the reaction (S)-2,3,4,5-tetrahydrodipicolinate + NADP(+) + H2O = (2S,4S)-4-hydroxy-2,3,4,5-tetrahydrodipicolinate + NADPH + H(+). The protein operates within amino-acid biosynthesis; L-lysine biosynthesis via DAP pathway; (S)-tetrahydrodipicolinate from L-aspartate: step 4/4. Catalyzes the conversion of 4-hydroxy-tetrahydrodipicolinate (HTPA) to tetrahydrodipicolinate. This Photorhabdus laumondii subsp. laumondii (strain DSM 15139 / CIP 105565 / TT01) (Photorhabdus luminescens subsp. laumondii) protein is 4-hydroxy-tetrahydrodipicolinate reductase.